The following is a 355-amino-acid chain: UDP-N-acetylglucosamine--N-acetylmuramyl-(pentapeptide) pyrophosphoryl-undecaprenol N-acetylglucosamine transferase (355 aa).

UDP-N-acetyl-alpha-D-glucosamine contacts are provided by residues Thr14–Gly16, Asn126, Arg162, Ser190, Ile245, Ala264–Glu269, and Gln289.

The protein belongs to the glycosyltransferase 28 family. MurG subfamily.

It localises to the cell inner membrane. The catalysed reaction is di-trans,octa-cis-undecaprenyl diphospho-N-acetyl-alpha-D-muramoyl-L-alanyl-D-glutamyl-meso-2,6-diaminopimeloyl-D-alanyl-D-alanine + UDP-N-acetyl-alpha-D-glucosamine = di-trans,octa-cis-undecaprenyl diphospho-[N-acetyl-alpha-D-glucosaminyl-(1-&gt;4)]-N-acetyl-alpha-D-muramoyl-L-alanyl-D-glutamyl-meso-2,6-diaminopimeloyl-D-alanyl-D-alanine + UDP + H(+). It participates in cell wall biogenesis; peptidoglycan biosynthesis. Cell wall formation. Catalyzes the transfer of a GlcNAc subunit on undecaprenyl-pyrophosphoryl-MurNAc-pentapeptide (lipid intermediate I) to form undecaprenyl-pyrophosphoryl-MurNAc-(pentapeptide)GlcNAc (lipid intermediate II). The chain is UDP-N-acetylglucosamine--N-acetylmuramyl-(pentapeptide) pyrophosphoryl-undecaprenol N-acetylglucosamine transferase from Mannheimia succiniciproducens (strain KCTC 0769BP / MBEL55E).